Reading from the N-terminus, the 340-residue chain is Glyceraldehyde-3-phosphate dehydrogenase (340 aa).

NAD(+)-binding positions include 12-13 (RI), aspartate 40, lysine 85, and serine 128. D-glyceraldehyde 3-phosphate is bound by residues 158-160 (SCT), threonine 189, arginine 204, 217-218 (TG), and arginine 240. The active-site Nucleophile is cysteine 159. Residue lysine 257 forms an Isoglutamyl lysine isopeptide (Lys-Gln) (interchain with Q-Cter in protein Pup) linkage. Asparagine 321 lines the NAD(+) pocket.

This sequence belongs to the glyceraldehyde-3-phosphate dehydrogenase family. In terms of assembly, homotetramer.

It is found in the cytoplasm. The enzyme catalyses D-glyceraldehyde 3-phosphate + phosphate + NAD(+) = (2R)-3-phospho-glyceroyl phosphate + NADH + H(+). Its pathway is carbohydrate degradation; glycolysis; pyruvate from D-glyceraldehyde 3-phosphate: step 1/5. Its function is as follows. Catalyzes the oxidative phosphorylation of glyceraldehyde 3-phosphate (G3P) to 1,3-bisphosphoglycerate (BPG) using the cofactor NAD. The first reaction step involves the formation of a hemiacetal intermediate between G3P and a cysteine residue, and this hemiacetal intermediate is then oxidized to a thioester, with concomitant reduction of NAD to NADH. The reduced NADH is then exchanged with the second NAD, and the thioester is attacked by a nucleophilic inorganic phosphate to produce BPG. This is Glyceraldehyde-3-phosphate dehydrogenase (gapA) from Mycolicibacterium smegmatis (strain ATCC 700084 / mc(2)155) (Mycobacterium smegmatis).